The primary structure comprises 1113 residues: MFGVSRGAFPSATTQPFGSTGSTFGGQQQQQQPVANTSAFGLSQQTNTTQAPAFGNFGNQTSNSPFGMSGSTTANGTPFGQSQLTNNNASGSIFGGMGNNTALSAGSASVVPNSTAGTSIKPFTTFEEKDPTTGVINVFQSITCMPEYRNFSFEELRFQDYQAGRKFGTSQNGTGTTFNNPQGTTNTGFGIMGNNNSTTSATTGGLFGQKPATGMFGTGTGSGGGFGSGATNSTGLFGSSTNLSGNSAFGANKPATSGGLFGNTTNNPTNGTNNTGLFGQQNSNTNGGLFGQQQNSFGANNVSNGGAFGQVNRGAFPQQQTQQGSGGIFGQSNANANGGAFGQQQGTGALFGAKPASGGLFGQSAGSKAFGMNTNPTGTTGGLFGQTNQQQSGGGLFGQQQNSNAGGLFGQNNQSQNQSGLFGQQNSSNAFGQPQQQGGLFGSKPAGGLFGQQQGASTFASGNAQNNSIFGQNNQQQQSTGGLFGQQNNQSQSQPGGLFGQTNQNNNQPFGQNGLQQPQQNNSLFGAKPTGFGNTSLFSNSTTNQSNGISGNNLQQQSGGLFQNKQQPASGGLFGSKPSNTVGGGLFGNNQVANQNNPASTSGGLFGSKPATGSLFGGTNSTAPNASSGGIFGSNNASNTAATTNSTGLFGNKPVGAGASTSAGGLFGNNNNSSLNNSNGSTGLFGSNNTSQSTNAGGLFQNNTSTNTSGGGLFSQPSQSMAQSQNALQQQQQQQRLQIQNNNPYGTNELFSKATVTNTVSYPIQPSATKIKADERKKASLTNAYKMIPKTLFTAKLKTNNSVMDKAQIKVDPKLSISIDKKNNQIAISNQQEENLDESILKASELLFNPDKRSFKNLINNRKMLIASEEKNNGSQNNDMNFKSKSEEQETILGKPKMDEKETANGGERMVLSSKNDGEDSATKHHSRNMDEENKENVADLQKQEYSEDDKKAVFADVAEKDASFINENYYISPSLDTLSSYSLLQLRKVPHLVVGHKSYGKIEFLEPVDLAGIPLTSLGGVIITFEPKTCIIYANLPNRPKRGEGINVRARITCFNCYPVDKSTRKPIKDPNHQLVKRHIERLKKNPNSKFESYDADSGTYVFIVNHAAEQT.

The interval 1–35 (MFGVSRGAFPSATTQPFGSTGSTFGGQQQQQQPVA) is disordered. 4 FG repeats span residues 2–3 (FG), 17–18 (FG), 24–25 (FG), and 40–41 (FG). Over residues 13–33 (TTQPFGSTGSTFGGQQQQQQP) the composition is skewed to low complexity. The disordered stretch occupies residues 49–91 (TQAPAFGNFGNQTSNSPFGMSGSTTANGTPFGQSQLTNNNASG). One copy of the GLFG 1; approximate repeat lies at 55–58 (GNFG). FG repeat units lie at residues 66–67 (FG), 79–80 (FG), and 94–95 (FG). The segment at 92–172 (SIFGGMGNNT…AGRKFGTSQN (81 aa)) is interaction with AFG2. A GLE2 binding sequence (GLEBS) region spans residues 110 to 166 (VVPNSTAGTSIKPFTTFEEKDPTTGVINVFQSITCMPEYRNFSFEELRFQDYQAGRK). The interval 160-362 (DYQAGRKFGT…AKPASGGLFG (203 aa)) is interaction with MEX67, not KAP95. FG repeat units lie at residues 167–168 (FG) and 189–190 (FG). One copy of the GLFG 2 repeat lies at 205 to 208 (GLFG). A GLFG 3; approximate repeat occupies 214-217 (GMFG). Residues 224-227 (GGFG) form a GLFG 4; approximate repeat. Residues 235-238 (GLFG) form a GLFG 5 repeat. An FG 10 repeat occupies 249–250 (FG). GLFG repeat units follow at residues 259–262 (GLFG), 276–279 (GLFG), and 288–291 (GLFG). A compositionally biased stretch (low complexity) spans 265-279 (TNNPTNGTNNTGLFG). Residues 265-341 (TNNPTNGTNN…SNANANGGAF (77 aa)) are disordered. Polar residues predominate over residues 280–304 (QQNSNTNGGLFGQQQNSFGANNVSN). The FG 11 repeat unit spans residues 297-298 (FG). One copy of the GLFG 9; approximate repeat lies at 306-309 (GAFG). Residues 327 to 330 (GIFG) form a GLFG 10; approximate repeat. Low complexity predominate over residues 330-341 (GQSNANANGGAF). One copy of the GLFG 11; approximate repeat lies at 339 to 342 (GAFG). The stretch at 351 to 352 (FG) is one FG 12 repeat. One copy of the GLFG 12 repeat lies at 359 to 362 (GLFG). The tract at residues 362-535 (GQSAGSKAFG…GAKPTGFGNT (174 aa)) is sufficient for interaction with MEX67 and KAP95. An FG 13 repeat occupies 370 to 371 (FG). The segment at 371–606 (GMNTNPTGTT…NPASTSGGLF (236 aa)) is disordered. GLFG repeat units follow at residues 382–385 (GLFG), 395–398 (GLFG), 407–410 (GLFG), and 420–423 (GLFG). Positions 410–438 (GQNNQSQNQSGLFGQQNSSNAFGQPQQQG) are enriched in low complexity. An FG 14 repeat occupies 431–432 (FG). GLFG repeat units follow at residues 439–442 (GLFG) and 448–451 (GLFG). The span at 451–464 (GQQQGASTFASGNA) shows a compositional bias: polar residues. 2 stretches are compositionally biased toward low complexity: residues 465–478 (QNNS…QQQQ) and 485–522 (GQQN…QQNN). The stretch at 470 to 471 (FG) is one FG 15 repeat. GLFG repeat units follow at residues 482-485 (GLFG) and 497-500 (GLFG). FG repeat units follow at residues 510–511 (FG), 525–526 (FG), and 532–533 (FG). Residues 532 to 569 (FGNTSLFSNSTTNQSNGISGNNLQQQSGGLFQNKQQPA) are compositionally biased toward polar residues. An interaction with KAP95, not MEX67 region spans residues 536-732 (SLFSNSTTNQ…QSQNALQQQQ (197 aa)). 3 GLFG repeats span residues 572 to 575 (GLFG), 585 to 588 (GLFG), and 604 to 607 (GLFG). The span at 588 to 603 (GNNQVANQNNPASTSG) shows a compositional bias: polar residues. An FG 19 repeat occupies 616-617 (FG). The GLFG 24; approximate repeat unit spans residues 630–633 (GIFG). GLFG repeat units lie at residues 648–651 (GLFG), 665–668 (GLFG), and 683–686 (GLFG). Low complexity predominate over residues 678-691 (SNGSTGLFGSNNTS). Disordered regions lie at residues 678-736 (SNGS…QQQR) and 868-939 (SEEK…ENVA). Positions 692–708 (QSTNAGGLFQNNTSTNT) are enriched in polar residues. Over residues 719 to 736 (QSMAQSQNALQQQQQQQR) the composition is skewed to low complexity. Position 886 is a phosphoserine (Ser886). A compositionally biased stretch (basic and acidic residues) spans 916-939 (NDGEDSATKHHSRNMDEENKENVA). One can recognise a Peptidase S59 domain in the interval 967-1109 (NENYYISPSL…GTYVFIVNHA (143 aa)). Residues 967-1113 (NENYYISPSL…FIVNHAAEQT (147 aa)) form an interaction with NUP82 NPC subcomplex region. Residues 969 to 1108 (NYYISPSLDT…SGTYVFIVNH (140 aa)) form a nucleoporin RNA-binding motif (NRM) region.

The protein belongs to the nucleoporin GLFG family. In terms of assembly, component of the nuclear pore complex (NPC). NPC constitutes the exclusive means of nucleocytoplasmic transport. NPCs allow the passive diffusion of ions and small molecules and the active, nuclear transport receptor-mediated bidirectional transport of macromolecules such as proteins, RNAs, ribonucleoparticles (RNPs), and ribosomal subunits across the nuclear envelope. Due to its 8-fold rotational symmetry, all subunits are present with 8 copies or multiples thereof. NUP116 interacts with the NUP82 subcomplex and GLE2. Through its FG repeats it interacts with numerous karyopherins including KAP95, PSE1 (GSP1-GDP dependent), MEX67, and to homomeric RNA. Interacts with CEX1. Interacts (via N-terminus) with AFG2 (via N-terminus).

Its subcellular location is the nucleus. The protein localises to the nuclear pore complex. The protein resides in the nucleus membrane. Functions as a component of the nuclear pore complex (NPC). NPC components, collectively referred to as nucleoporins (NUPs), can play the role of both NPC structural components and of docking or interaction partners for transiently associated nuclear transport factors. Active directional transport is assured by both, a Phe-Gly (FG) repeat affinity gradient for these transport factors across the NPC and a transport cofactor concentration gradient across the nuclear envelope (GSP1 and GSP2 GTPases associated predominantly with GTP in the nucleus, with GDP in the cytoplasm). Plays an important role in several nuclear export and import pathways including poly(A)+ RNA, tRNA, pre-ribosome, and protein transport. By binding ATPase AFG2, promotes AFG2-mediated release of shuttling protein RLP24 from pre-60S ribosomal particles. This chain is Nucleoporin NUP116/NSP116 (NUP116), found in Saccharomyces cerevisiae (strain ATCC 204508 / S288c) (Baker's yeast).